Here is a 289-residue protein sequence, read N- to C-terminus: Phosphatidylserine decarboxylase proenzyme (289 aa).

Catalysis depends on charge relay system; for autoendoproteolytic cleavage activity residues D89, H146, and S252. Residue S252 is the Schiff-base intermediate with substrate; via pyruvic acid; for decarboxylase activity of the active site. A Pyruvic acid (Ser); by autocatalysis modification is found at S252.

The protein belongs to the phosphatidylserine decarboxylase family. PSD-B subfamily. Prokaryotic type I sub-subfamily. Heterodimer of a large membrane-associated beta subunit and a small pyruvoyl-containing alpha subunit. Pyruvate is required as a cofactor. Is synthesized initially as an inactive proenzyme. Formation of the active enzyme involves a self-maturation process in which the active site pyruvoyl group is generated from an internal serine residue via an autocatalytic post-translational modification. Two non-identical subunits are generated from the proenzyme in this reaction, and the pyruvate is formed at the N-terminus of the alpha chain, which is derived from the carboxyl end of the proenzyme. The autoendoproteolytic cleavage occurs by a canonical serine protease mechanism, in which the side chain hydroxyl group of the serine supplies its oxygen atom to form the C-terminus of the beta chain, while the remainder of the serine residue undergoes an oxidative deamination to produce ammonia and the pyruvoyl prosthetic group on the alpha chain. During this reaction, the Ser that is part of the protease active site of the proenzyme becomes the pyruvoyl prosthetic group, which constitutes an essential element of the active site of the mature decarboxylase.

It localises to the cell membrane. The catalysed reaction is a 1,2-diacyl-sn-glycero-3-phospho-L-serine + H(+) = a 1,2-diacyl-sn-glycero-3-phosphoethanolamine + CO2. It participates in phospholipid metabolism; phosphatidylethanolamine biosynthesis; phosphatidylethanolamine from CDP-diacylglycerol: step 2/2. Functionally, catalyzes the formation of phosphatidylethanolamine (PtdEtn) from phosphatidylserine (PtdSer). This chain is Phosphatidylserine decarboxylase proenzyme, found in Shewanella denitrificans (strain OS217 / ATCC BAA-1090 / DSM 15013).